Reading from the N-terminus, the 367-residue chain is Choline-phosphate cytidylyltransferase A (367 aa).

M1 bears the N-acetylmethionine mark. The tract at residues 1 to 31 (MDAQSSAKVNSRKRRKEVPGPNGATEEDGIP) is disordered. K8 is modified (N6-acetyllysine). I84, F85, H92, and K122 together coordinate CTP. Phosphocholine-binding residues include K122 and W151. H168, D169, Y173, Q195, R196, T197, and I200 together coordinate CTP. Amphipathic regions lie at residues 228 to 287 (KELN…EFIG) and 298 to 315 (ALKH…QAIS). S233 bears the Phosphoserine mark. The interval 272-293 (IDLIQKWEEKSREFIGSFLEMF) is autoinhibitory (AI). The segment at 313–367 (AISPKQSPSSSPTHERSPSPSFRWPFSGKTSPSSSPASLSRCKAVTCDISEDEED) is disordered. The residue at position 315 (S315) is a Phosphoserine; by PKC. Over residues 315 to 324 (SPKQSPSSSP) the composition is skewed to polar residues. Phosphoserine occurs at positions 319, 321, 322, and 323. Repeat 1 spans residues 319–324 (SPSSSP). Residues 319–348 (SPSSSPTHERSPSPSFRWPFSGKTSPSSSP) are 3 X repeats. T325 is modified (phosphothreonine). 2 positions are modified to phosphoserine: S329 and S331. The 2; approximate repeat unit spans residues 329–333 (SPSPS). A compositionally biased stretch (low complexity) spans 330–352 (PSPSFRWPFSGKTSPSSSPASLS). A Phosphoserine; by PKC modification is found at S333. Phosphothreonine is present on T342. Phosphoserine occurs at positions 343, 345, 346, 347, 350, and 352. The stretch at 343 to 348 (SPSSSP) is repeat 3. At T358 the chain carries Phosphothreonine. S362 is modified (phosphoserine; by CK2).

Belongs to the cytidylyltransferase family. As to quaternary structure, homodimer. In terms of processing, the serine residues of the C-terminus are phosphorylated. The inactive soluble form is stabilized by phosphorylation, the active membrane bound form is promoted by anionic lipids or diacylglycerol, and is stabilized by dephosphorylation. The N-terminus is blocked. Post-translationally, monoubiquitinated by the SCF(FBXL2) complex, leading to proteasomal degradation.

Its subcellular location is the cytoplasm. It is found in the cytosol. It localises to the membrane. The protein localises to the endoplasmic reticulum membrane. The protein resides in the nucleus. It catalyses the reaction phosphocholine + CTP + H(+) = CDP-choline + diphosphate. It functions in the pathway phospholipid metabolism; phosphatidylcholine biosynthesis; phosphatidylcholine from phosphocholine: step 1/2. Interconverts between an inactive cytosolic form and an active membrane-bound form. Activation involves disruption of an inhibitory interaction between helices at the base of the active site and the autoinhibitory (AI) region. Activated by N-methylethanolamine. Activated by oleic acid-containing phosphatidylcholine vesicles. Functionally, catalyzes the key rate-limiting step in the CDP-choline pathway for phosphatidylcholine biosynthesis. The protein is Choline-phosphate cytidylyltransferase A (Pcyt1a) of Rattus norvegicus (Rat).